Consider the following 271-residue polypeptide: Hydroxyethylthiazole kinase (271 aa).

Residue Met46 participates in substrate binding. Positions 122 and 169 each coordinate ATP. Gly196 serves as a coordination point for substrate.

The protein belongs to the Thz kinase family. Requires Mg(2+) as cofactor.

It catalyses the reaction 5-(2-hydroxyethyl)-4-methylthiazole + ATP = 4-methyl-5-(2-phosphooxyethyl)-thiazole + ADP + H(+). Its pathway is cofactor biosynthesis; thiamine diphosphate biosynthesis; 4-methyl-5-(2-phosphoethyl)-thiazole from 5-(2-hydroxyethyl)-4-methylthiazole: step 1/1. Its function is as follows. Catalyzes the phosphorylation of the hydroxyl group of 4-methyl-5-beta-hydroxyethylthiazole (THZ). In Alkaliphilus oremlandii (strain OhILAs) (Clostridium oremlandii (strain OhILAs)), this protein is Hydroxyethylthiazole kinase.